The sequence spans 131 residues: Large ribosomal subunit protein bL12 (131 aa).

This sequence belongs to the bacterial ribosomal protein bL12 family. In terms of assembly, homodimer. Part of the ribosomal stalk of the 50S ribosomal subunit. Forms a multimeric L10(L12)X complex, where L10 forms an elongated spine to which 2 to 4 L12 dimers bind in a sequential fashion. Binds GTP-bound translation factors.

Forms part of the ribosomal stalk which helps the ribosome interact with GTP-bound translation factors. Is thus essential for accurate translation. The protein is Large ribosomal subunit protein bL12 of Tropheryma whipplei (strain Twist) (Whipple's bacillus).